Consider the following 235-residue polypeptide: Small ribosomal subunit protein eS4 (235 aa).

Residues 38–99 (VTLLSIIRDY…GESYRVVYND (62 aa)) enclose the S4 RNA-binding domain.

This sequence belongs to the eukaryotic ribosomal protein eS4 family.

This chain is Small ribosomal subunit protein eS4 (rps4e), found in Thermoplasma acidophilum (strain ATCC 25905 / DSM 1728 / JCM 9062 / NBRC 15155 / AMRC-C165).